Reading from the N-terminus, the 422-residue chain is UDP-N-acetylglucosamine 1-carboxyvinyltransferase (422 aa).

Position 22 to 23 (22 to 23 (KN)) interacts with phosphoenolpyruvate. A UDP-N-acetyl-alpha-D-glucosamine-binding site is contributed by arginine 93. Cysteine 117 acts as the Proton donor in catalysis. At cysteine 117 the chain carries 2-(S-cysteinyl)pyruvic acid O-phosphothioketal. UDP-N-acetyl-alpha-D-glucosamine contacts are provided by residues 122-126 (RPVDL), 162-165 (KVSV), aspartate 307, and isoleucine 329.

The protein belongs to the EPSP synthase family. MurA subfamily.

It localises to the cytoplasm. It carries out the reaction phosphoenolpyruvate + UDP-N-acetyl-alpha-D-glucosamine = UDP-N-acetyl-3-O-(1-carboxyvinyl)-alpha-D-glucosamine + phosphate. It participates in cell wall biogenesis; peptidoglycan biosynthesis. Cell wall formation. Adds enolpyruvyl to UDP-N-acetylglucosamine. In Hamiltonella defensa subsp. Acyrthosiphon pisum (strain 5AT), this protein is UDP-N-acetylglucosamine 1-carboxyvinyltransferase.